Consider the following 179-residue polypeptide: Large ribosomal subunit protein uL5c (179 aa).

It belongs to the universal ribosomal protein uL5 family. In terms of assembly, part of the 50S ribosomal subunit; contacts the 5S rRNA.

Its subcellular location is the plastid. It is found in the chloroplast. Functionally, binds 5S rRNA, forms part of the central protuberance of the 50S subunit. This chain is Large ribosomal subunit protein uL5c (rpl5), found in Euglena gracilis.